The chain runs to 172 residues: Nicotinamide-nucleotide adenylyltransferase (172 aa).

The protein belongs to the archaeal NMN adenylyltransferase family.

The protein localises to the cytoplasm. The enzyme catalyses beta-nicotinamide D-ribonucleotide + ATP + H(+) = diphosphate + NAD(+). Its pathway is cofactor biosynthesis; NAD(+) biosynthesis; NAD(+) from nicotinamide D-ribonucleotide: step 1/1. The chain is Nicotinamide-nucleotide adenylyltransferase from Methanococcus vannielii (strain ATCC 35089 / DSM 1224 / JCM 13029 / OCM 148 / SB).